A 333-amino-acid chain; its full sequence is uncharacterized protein (333 aa).

Belongs to the polysaccharide synthase family.

This is an uncharacterized protein from Methanocaldococcus jannaschii (strain ATCC 43067 / DSM 2661 / JAL-1 / JCM 10045 / NBRC 100440) (Methanococcus jannaschii).